The sequence spans 172 residues: Large ribosomal subunit protein uL10 (172 aa).

Belongs to the universal ribosomal protein uL10 family. As to quaternary structure, part of the ribosomal stalk of the 50S ribosomal subunit. The N-terminus interacts with L11 and the large rRNA to form the base of the stalk. The C-terminus forms an elongated spine to which L12 dimers bind in a sequential fashion forming a multimeric L10(L12)X complex.

In terms of biological role, forms part of the ribosomal stalk, playing a central role in the interaction of the ribosome with GTP-bound translation factors. In Ruegeria sp. (strain TM1040) (Silicibacter sp.), this protein is Large ribosomal subunit protein uL10.